Here is an 846-residue protein sequence, read N- to C-terminus: Spindle pole body component SPC98 (846 aa).

Ser-124 and Ser-136 each carry phosphoserine.

Belongs to the TUBGCP family. As to quaternary structure, interacts with TUB4, SPC72 and SPC97.

The protein resides in the nucleus. Its subcellular location is the cytoplasm. It localises to the cytoskeleton. The protein localises to the microtubule organizing center. It is found in the spindle pole body. Its function is as follows. Involved in microtubule organization by the microtubule organizing center, the spindle pole body (SPB). Probably part of the microtubule attachment site at the SPB. In Saccharomyces cerevisiae (strain ATCC 204508 / S288c) (Baker's yeast), this protein is Spindle pole body component SPC98 (SPC98).